Here is a 240-residue protein sequence, read N- to C-terminus: Uridylate kinase (240 aa).

Residue 12–15 (KLSG) participates in ATP binding. Gly-54 contributes to the UMP binding site. The ATP site is built by Gly-55 and Arg-59. UMP is bound by residues Asp-74 and 135–142 (TGNPFFTT). Residues Thr-162, Tyr-168, and Asp-171 each contribute to the ATP site.

Belongs to the UMP kinase family. Homohexamer.

It localises to the cytoplasm. It catalyses the reaction UMP + ATP = UDP + ADP. It participates in pyrimidine metabolism; CTP biosynthesis via de novo pathway; UDP from UMP (UMPK route): step 1/1. Its activity is regulated as follows. Inhibited by UTP. Its function is as follows. Catalyzes the reversible phosphorylation of UMP to UDP. This Xanthomonas euvesicatoria pv. vesicatoria (strain 85-10) (Xanthomonas campestris pv. vesicatoria) protein is Uridylate kinase.